Consider the following 444-residue polypeptide: 23S rRNA (uracil(1939)-C(5))-methyltransferase RlmD (444 aa).

The TRAM domain maps to 5–67; it reads RNRFDRTPFQ…RHFDEAKTVE (63 aa). C80, C86, C89, and C168 together coordinate [4Fe-4S] cluster. The S-adenosyl-L-methionine site is built by Q276, F305, N310, E326, D353, and D374. C400 serves as the catalytic Nucleophile.

This sequence belongs to the class I-like SAM-binding methyltransferase superfamily. RNA M5U methyltransferase family. RlmD subfamily.

The catalysed reaction is uridine(1939) in 23S rRNA + S-adenosyl-L-methionine = 5-methyluridine(1939) in 23S rRNA + S-adenosyl-L-homocysteine + H(+). Catalyzes the formation of 5-methyl-uridine at position 1939 (m5U1939) in 23S rRNA. In Xanthomonas oryzae pv. oryzae (strain MAFF 311018), this protein is 23S rRNA (uracil(1939)-C(5))-methyltransferase RlmD.